A 363-amino-acid chain; its full sequence is tRNA N6-adenosine threonylcarbamoyltransferase (363 aa).

Fe cation-binding residues include histidine 121 and histidine 125. Residues 143–147 (LASGG), aspartate 176, glycine 189, and asparagine 287 contribute to the substrate site. Aspartate 315 is a binding site for Fe cation.

The protein belongs to the KAE1 / TsaD family. The cofactor is Fe(2+).

The protein resides in the cytoplasm. It catalyses the reaction L-threonylcarbamoyladenylate + adenosine(37) in tRNA = N(6)-L-threonylcarbamoyladenosine(37) in tRNA + AMP + H(+). In terms of biological role, required for the formation of a threonylcarbamoyl group on adenosine at position 37 (t(6)A37) in tRNAs that read codons beginning with adenine. Is involved in the transfer of the threonylcarbamoyl moiety of threonylcarbamoyl-AMP (TC-AMP) to the N6 group of A37, together with TsaE and TsaB. TsaD likely plays a direct catalytic role in this reaction. The protein is tRNA N6-adenosine threonylcarbamoyltransferase of Rhodopseudomonas palustris (strain ATCC BAA-98 / CGA009).